We begin with the raw amino-acid sequence, 82 residues long: Small ribosomal subunit protein bS18 (82 aa).

The disordered stretch occupies residues 1–25; the sequence is MKRNNMKRARMEQSRRPKKNPLKAE.

It belongs to the bacterial ribosomal protein bS18 family. Part of the 30S ribosomal subunit. Forms a tight heterodimer with protein bS6.

In terms of biological role, binds as a heterodimer with protein bS6 to the central domain of the 16S rRNA, where it helps stabilize the platform of the 30S subunit. This chain is Small ribosomal subunit protein bS18, found in Corynebacterium urealyticum (strain ATCC 43042 / DSM 7109).